The sequence spans 308 residues: HTH-type transcriptional regulator YtlI (308 aa).

Positions Met1–Thr57 constitute an HTH lysR-type domain. The segment at residues Phe18 to Lys37 is a DNA-binding region (H-T-H motif).

Belongs to the LysR transcriptional regulatory family.

In terms of biological role, positively regulates the expression of ytmI operon in response to the availability of sulfur sources. This Bacillus subtilis (strain 168) protein is HTH-type transcriptional regulator YtlI (ytlI).